Here is a 331-residue protein sequence, read N- to C-terminus: Flagellar P-ring protein (331 aa).

The N-terminal stretch at 1–22 is a signal peptide; the sequence is MRKVTIFIIIIVALTGFGSVRI.

Belongs to the FlgI family. The basal body constitutes a major portion of the flagellar organelle and consists of four rings (L,P,S, and M) mounted on a central rod.

Its subcellular location is the periplasm. It localises to the bacterial flagellum basal body. Its function is as follows. Assembles around the rod to form the L-ring and probably protects the motor/basal body from shearing forces during rotation. The polypeptide is Flagellar P-ring protein (Pseudothermotoga lettingae (strain ATCC BAA-301 / DSM 14385 / NBRC 107922 / TMO) (Thermotoga lettingae)).